The sequence spans 1384 residues: ABC transporter C family member 2 (1384 aa).

Residues 104-388 (NKISVATKIF…LPEAIHRALS (285 aa)) form the ABC transmembrane type-1 1 domain. Helical transmembrane passes span 112 to 132 (IFVA…IYYI), 140 to 160 (TFKF…SLTL), 226 to 246 (IFVF…IVGL), 247 to 267 (SGLV…FLST), and 333 to 353 (MITQ…YALT). The 220-residue stretch at 505–724 (IEYDGAVQPS…GIDFESIMKT (220 aa)) folds into the ABC transporter 1 domain. 537–544 (GIVGSGKT) lines the ATP pocket. Residues 729 to 756 (IDENDQSSTSTTDKKSSTSSSSSELKKS) form a disordered region. Over residues 735–756 (SSTSTTDKKSSTSSSSSELKKS) the composition is skewed to low complexity. 5 consecutive transmembrane segments (helical) span residues 813 to 833 (LFFL…LSDF), 852 to 872 (ILYY…RYFM), 941 to 961 (LFMM…LVVV), 1036 to 1056 (GIRL…SSLF), and 1061 to 1081 (GFSV…NWTI). In terms of domain architecture, ABC transmembrane type-1 2 spans 814–1093 (FFLTCALYFI…MTELEVKMNS (280 aa)). Positions 1137–1371 (VEFKNVEIKY…EGSRFKKLVK (235 aa)) constitute an ABC transporter 2 domain. 1171–1178 (GRTGAGKS) serves as a coordination point for ATP.

It belongs to the ABC transporter superfamily. ABCC family. Conjugate transporter (TC 3.A.1.208) subfamily.

It is found in the membrane. In Dictyostelium discoideum (Social amoeba), this protein is ABC transporter C family member 2 (abcC2).